Reading from the N-terminus, the 128-residue chain is Fumarate reductase subunit C (128 aa).

The next 3 membrane-spanning stretches (helical) occupy residues A31 to G51, V67 to V87, and I106 to V126.

The protein belongs to the FrdC family. Part of an enzyme complex containing four subunits: a flavoprotein (FrdA), an iron-sulfur protein (FrdB), and two hydrophobic anchor proteins (FrdC and FrdD).

It localises to the cell inner membrane. Anchors the catalytic components of the fumarate reductase complex to the cell membrane, binds quinones. The protein is Fumarate reductase subunit C of Haemophilus ducreyi (strain 35000HP / ATCC 700724).